Reading from the N-terminus, the 246-residue chain is Acetoacetyl-CoA reductase (246 aa).

NADP(+) is bound by residues 12 to 14 (GGI) and 88 to 92 (CAGIT). Substrate is bound by residues Asp94 and 147 to 150 (QFGQ). The Proton acceptor role is filled by Tyr153. 183–186 (PGYV) contacts NADP(+). Substrate is bound at residue 184–185 (GY).

This sequence belongs to the short-chain dehydrogenases/reductases (SDR) family.

It localises to the cytoplasm. The catalysed reaction is a (3R)-3-hydroxyacyl-CoA + NADP(+) = a 3-oxoacyl-CoA + NADPH + H(+). Its pathway is biopolymer metabolism; poly-(R)-3-hydroxybutanoate biosynthesis. This is Acetoacetyl-CoA reductase from Allochromatium vinosum (strain ATCC 17899 / DSM 180 / NBRC 103801 / NCIMB 10441 / D) (Chromatium vinosum).